The sequence spans 1893 residues: Transcription initiation factor TFIID subunit 1 (1893 aa).

The Protein kinase 1 domain occupies 1 to 435; the sequence is MGPGCDLLLR…VTQLHWEDDI (435 aa). S137 is modified (phosphoserine; by autocatalysis). Disordered stretches follow at residues 155–184 and 197–224; these read LMPPPPPPPGPMKKDKDQDSITGVSENGEG and ASEKVDFSSSSDSESEMGPQEATQAESE. The span at 156-165 shows a compositional bias: pro residues; that stretch reads MPPPPPPPGP. Low complexity predominate over residues 197–208; the sequence is ASEKVDFSSSSD. S328 carries the phosphoserine; by autocatalysis modification. The tract at residues 534–557 is disordered; that stretch reads IPDEKEEATSNSPSKESKKESSLK. Residues 538–997 are histone acetyltransferase (HAT); sequence KEEATSNSPS…KIPNKPTQQK (460 aa). K565 carries the post-translational modification N6-acetyllysine. Residues K570 and K583 each participate in a glycyl lysine isopeptide (Lys-Gly) (interchain with G-Cter in SUMO2) cross-link. 4 disordered regions span residues 990–1009, 1128–1148, 1158–1177, and 1254–1278; these read PNKPTQQKDDKEPQPVKKTV, MLQNKKTSSQLSREREEQERK, GSAASGNNHRDDDTASVTSL, and RLKRNQEKEKLKGPPEKKPKKMKER. Composition is skewed to basic and acidic residues over residues 995–1004 and 1139–1148; these read QQKDDKEPQP and SREREEQERK. The HMG box; involved in promoter binding DNA-binding region spans 1216-1294; that stretch reads VRIRTTKDEE…CGACGAIGHM (79 aa). Positions 1254-1270 are enriched in basic and acidic residues; that stretch reads RLKRNQEKEKLKGPPEK. Positions 1363–1650 are interaction with ASF1A and ASF1B; the sequence is VLKFPKQQLP…TAKEAALEEA (288 aa). The short motif at 1372–1379 is the Nuclear localization signal element; the sequence is PPKKKRRV. Bromo domains follow at residues 1397–1505 and 1519–1628; these read RRRT…LKEK and LLDD…LTEY. In terms of domain architecture, Protein kinase 2 spans 1446-1893; sequence MDLQTLRENV…AGDSDLDSDE (448 aa). Residues 1651–1676 are disordered; sequence ELESLDPMTPGPYTPQPPDLYDTNTS. The segment covering 1659 to 1668 has biased composition (pro residues); sequence TPGPYTPQPP. 5 positions are modified to phosphoserine: S1690, S1693, A1718, E1721, and G1723. Residues 1696-1893 form a disordered region; sequence DIPSATPEKQ…AGDSDLDSDE (198 aa). 2 stretches are compositionally biased toward acidic residues: residues 1709 to 1723 and 1741 to 1756; these read EGEDGDGDLADEEEG and EGEDDEEDAGSDEEGD. Phosphoserine occurs at positions 1799, 1802, and 1820. A compositionally biased stretch (polar residues) spans 1830 to 1840; the sequence is KSNTQDTSFSS. The span at 1846-1857 shows a compositional bias: acidic residues; it reads VSEEEEDEEEEE. The residue at position 1847 (S1847) is a Phosphoserine. Residues 1860 to 1869 show a composition bias toward polar residues; sequence SGPSVLSQVH.

Belongs to the TAF1 family. In terms of assembly, component of the TFIID basal transcription factor complex, composed of TATA-box-binding protein TBP, and a number of TBP-associated factors (TAFs), including TAF1, TAF2, TAF3, TAF4, TAF5, TAF6, TAF7, TAF8, TAF9, TAF10, TAF11, TAF12 and TAF13. Interacts with TAF7; the interaction is direct. TAF1, when part of the TFIID complex, interacts with C-terminus of TP53. Part of a TFIID-containing RNA polymerase II pre-initiation complex that is composed of TBP and at least GTF2A1, GTF2A2, GTF2E1, GTF2E2, GTF2F1, GTF2H2, GTF2H3, GTF2H4, GTF2H5, GTF2B, TCEA1, ERCC2, ERCC3, TAF1, TAF2, TAF3, TAF4, TAF5, TAF6, TAF7, TAF8, TAF9, TAF10, TAF11, TAF12 and TAF13. Component of some MLL1/MLL complex, at least composed of the core components KMT2A/MLL1, ASH2L, HCFC1/HCF1, WDR5 and RBBP5, as well as the facultative components BACC1, CHD8, E2F6, HSP70, INO80C, KANSL1, LAS1L, MAX, MCRS1, MGA, KAT8/MOF, PELP1, PHF20, PRP31, RING2, RUVB1/TIP49A, RUVB2/TIP49B, SENP3, TAF1, TAF4, TAF6, TAF7, TAF9 and TEX10. RB1 interacts with the N-terminal domain of TAF1. Interacts with ASF1A and ASF1B. Interacts (via bromo domains) with acetylated lysine residues on the N-terminus of histone H1.4, H2A, H2B, H3 and H4 (in vitro). As to quaternary structure, (Microbial infection) Interacts with SV40 Large T antigen. (Microbial infection) Interacts with herpes simplex virus 1 ICP4. Requires Mg(2+) as cofactor. Phosphorylated by casein kinase II in vitro.

It is found in the nucleus. The enzyme catalyses L-seryl-[protein] + ATP = O-phospho-L-seryl-[protein] + ADP + H(+). It catalyses the reaction L-threonyl-[protein] + ATP = O-phospho-L-threonyl-[protein] + ADP + H(+). The catalysed reaction is L-lysyl-[protein] + acetyl-CoA = N(6)-acetyl-L-lysyl-[protein] + CoA + H(+). With respect to regulation, autophosphorylates on Ser residues. Inhibited by retinoblastoma tumor suppressor protein, RB1. Binding to TAF7 or CIITA inhibits the histone acetyltransferase activity. Functionally, the TFIID basal transcription factor complex plays a major role in the initiation of RNA polymerase II (Pol II)-dependent transcription. TFIID recognizes and binds promoters with or without a TATA box via its subunit TBP, a TATA-box-binding protein, and promotes assembly of the pre-initiation complex (PIC). The TFIID complex consists of TBP and TBP-associated factors (TAFs), including TAF1, TAF2, TAF3, TAF4, TAF5, TAF6, TAF7, TAF8, TAF9, TAF10, TAF11, TAF12 and TAF13. TAF1 is the largest component and core scaffold of the TFIID complex, involved in nucleating complex assembly. TAF1 forms a promoter DNA binding subcomplex of TFIID, together with TAF7 and TAF2. Contains novel N- and C-terminal Ser/Thr kinase domains which can autophosphorylate or transphosphorylate other transcription factors. Phosphorylates TP53 on 'Thr-55' which leads to MDM2-mediated degradation of TP53. Phosphorylates GTF2A1 and GTF2F1 on Ser residues. Possesses DNA-binding activity. Essential for progression of the G1 phase of the cell cycle. Exhibits histone acetyltransferase activity towards histones H3 and H4. This chain is Transcription initiation factor TFIID subunit 1, found in Homo sapiens (Human).